We begin with the raw amino-acid sequence, 474 residues long: UDP-glycosyltransferase 71E1 (474 aa).

UDP-alpha-D-glucose contacts are provided by residues S275, 341–342 (WA), 359–367 (HCGWNSTLE), and 381–384 (YAEQ).

It belongs to the UDP-glycosyltransferase family.

Its function is as follows. May glycosylate diterpenes or flavonols in leaves. This is UDP-glycosyltransferase 71E1 from Stevia rebaudiana (Stevia).